The primary structure comprises 428 residues: C4-dicarboxylate transport protein (428 aa).

Transmembrane regions (helical) follow at residues 8–28, 44–64, 76–96, 142–162, 184–206, 222–242, 326–346, and 352–372; these read SLYF…HFYP, LIKM…IAGM, VALL…LIIV, IGAF…LFGF, VIFG…AMAF, LIIC…GSIA, IVHQ…AAGV, and IVLA…LALI.

The protein belongs to the dicarboxylate/amino acid:cation symporter (DAACS) (TC 2.A.23) family.

The protein resides in the cell inner membrane. Responsible for the transport of dicarboxylates such as succinate, fumarate, and malate from the periplasm across the membrane. In Shigella flexneri, this protein is C4-dicarboxylate transport protein.